A 264-amino-acid polypeptide reads, in one-letter code: Thymidylate synthase (264 aa).

DUMP-binding positions include arginine 21 and 126 to 127; that span reads RR. Cysteine 146 serves as the catalytic Nucleophile. DUMP contacts are provided by residues 166 to 169, asparagine 177, and 207 to 209; these read RSAD and HLY. Aspartate 169 contacts (6R)-5,10-methylene-5,6,7,8-tetrahydrofolate. Residue alanine 263 coordinates (6R)-5,10-methylene-5,6,7,8-tetrahydrofolate.

It belongs to the thymidylate synthase family. Bacterial-type ThyA subfamily. Homodimer.

Its subcellular location is the cytoplasm. The catalysed reaction is dUMP + (6R)-5,10-methylene-5,6,7,8-tetrahydrofolate = 7,8-dihydrofolate + dTMP. It participates in pyrimidine metabolism; dTTP biosynthesis. In terms of biological role, catalyzes the reductive methylation of 2'-deoxyuridine-5'-monophosphate (dUMP) to 2'-deoxythymidine-5'-monophosphate (dTMP) while utilizing 5,10-methylenetetrahydrofolate (mTHF) as the methyl donor and reductant in the reaction, yielding dihydrofolate (DHF) as a by-product. This enzymatic reaction provides an intracellular de novo source of dTMP, an essential precursor for DNA biosynthesis. The protein is Thymidylate synthase of Bradyrhizobium sp. (strain BTAi1 / ATCC BAA-1182).